A 156-amino-acid polypeptide reads, in one-letter code: Oleosin Zm-I (156 aa).

A disordered region spans residues 1–30 (MADHHRGATGGGGGYGDLQRGGGMHGEAQQ). A2 carries the post-translational modification N-acetylalanine. The tract at residues 2 to 42 (ADHHRGATGGGGGYGDLQRGGGMHGEAQQQQKQGAMMTALK) is polar. Over residues 8–25 (ATGGGGGYGDLQRGGGMH) the composition is skewed to gly residues. The interval 43 to 114 (AATAATFGGS…AALSVFSWMY (72 aa)) is hydrophobic. 2 consecutive transmembrane segments (helical) span residues 51-71 (GSML…LTVA) and 95-115 (GFVT…WMYK).

It belongs to the oleosin family. Post-translationally, the N-terminus is blocked.

It localises to the lipid droplet. The protein localises to the membrane. May have a structural role to stabilize the lipid body during desiccation of the seed by preventing coalescence of the oil. Probably interacts with both lipid and phospholipid moieties of lipid bodies. May also provide recognition signals for specific lipase anchorage in lipolysis during seedling growth. This is Oleosin Zm-I (OLE16) from Zea mays (Maize).